Here is a 189-residue protein sequence, read N- to C-terminus: Thymidine kinase (189 aa).

ATP is bound by residues 9-16 (GTMNSGKT) and 85-88 (DESQ). The Proton acceptor role is filled by glutamate 86. 4 residues coordinate Zn(2+): cysteine 143, cysteine 146, cysteine 180, and histidine 183.

This sequence belongs to the thymidine kinase family. In terms of assembly, homotetramer.

It is found in the cytoplasm. It catalyses the reaction thymidine + ATP = dTMP + ADP + H(+). This Streptococcus pyogenes serotype M6 (strain ATCC BAA-946 / MGAS10394) protein is Thymidine kinase.